The following is a 90-amino-acid chain: MNYFAVLCIFSCICLWQFSDAAPFISVQSSSQSRSQKVMNGMLRTLYDYSVQDSVNDATGHLIHTHKSNFNSDVMSPEEIERVRQQLNMA.

Residues Met-1–Ala-21 form the signal peptide.

In terms of tissue distribution, main cells of the accessory glands of males.

It localises to the secreted. The protein resides in the extracellular space. Its function is as follows. This protein is transferred from male to female during mating and may affect egglaying and behavior after mating. In Drosophila sechellia (Fruit fly), this protein is Accessory gland-specific peptide 26Ab (Acp26Ab).